Consider the following 283-residue polypeptide: Pantothenate synthetase (283 aa).

Position 30 to 37 (30 to 37 (MGNLHDAH)) interacts with ATP. His37 (proton donor) is an active-site residue. Residue Gln61 participates in (R)-pantoate binding. Residue Gln61 coordinates beta-alanine. 149 to 152 (GVKD) is a binding site for ATP. (R)-pantoate is bound at residue Gln155. ATP-binding positions include Val178 and 186–189 (MSSR).

It belongs to the pantothenate synthetase family. As to quaternary structure, homodimer.

It localises to the cytoplasm. It catalyses the reaction (R)-pantoate + beta-alanine + ATP = (R)-pantothenate + AMP + diphosphate + H(+). It participates in cofactor biosynthesis; (R)-pantothenate biosynthesis; (R)-pantothenate from (R)-pantoate and beta-alanine: step 1/1. Its function is as follows. Catalyzes the condensation of pantoate with beta-alanine in an ATP-dependent reaction via a pantoyl-adenylate intermediate. The protein is Pantothenate synthetase of Cellvibrio japonicus (strain Ueda107) (Pseudomonas fluorescens subsp. cellulosa).